Consider the following 185-residue polypeptide: Riboflavin kinase (185 aa).

Residues Thr-41 and Asn-43 each coordinate Mg(2+). Residue Glu-122 is the Nucleophile of the active site.

This sequence belongs to the flavokinase family. Zn(2+) is required as a cofactor. The cofactor is Mg(2+).

The catalysed reaction is riboflavin + ATP = FMN + ADP + H(+). It functions in the pathway cofactor biosynthesis; FMN biosynthesis; FMN from riboflavin (ATP route): step 1/1. Its function is as follows. Catalyzes the phosphorylation of riboflavin (vitamin B2) to form flavin mononucleotide (FMN) coenzyme. This is Riboflavin kinase (FMN1) from Kluyveromyces lactis (strain ATCC 8585 / CBS 2359 / DSM 70799 / NBRC 1267 / NRRL Y-1140 / WM37) (Yeast).